The primary structure comprises 268 residues: MTLLNVSGLSHHYAHGGFNGKHQHQAVLNNVSLTLKSGETVALLGRSGCGKSTLARLLVGLESPAQGNISWRGEPLAKLNRAQRKAFRRDIQMVFQDSISAVNPRKTVREILREPMRHLLSLKKSEQLARASEMLKAVDLDDSVLDKRPPQLSGGQLQRVCLARALAVEPKLLILDEAVSNLDLVLQAGVIRLLKKLQQQFGTACLFITHDLRLVERFCQRVMVMDNGQIVETQVVGDKLTFSSDAGRVLQNAVLPAFPVRRRTTEKV.

The ABC transporter domain maps to 4–252; that stretch reads LNVSGLSHHY…SSDAGRVLQN (249 aa). Position 45–52 (45–52) interacts with ATP; that stretch reads GRSGCGKS.

It belongs to the ABC transporter superfamily. Nickel importer (TC 3.A.1.5.3) family. In terms of assembly, the complex is composed of two ATP-binding proteins (NikD and NikE), two transmembrane proteins (NikB and NikC) and a solute-binding protein (NikA).

Its subcellular location is the cell inner membrane. It carries out the reaction Ni(2+)(out) + ATP + H2O = Ni(2+)(in) + ADP + phosphate + H(+). In terms of biological role, part of the ABC transporter complex NikABCDE involved in nickel import. Responsible for energy coupling to the transport system. This Shigella sonnei (strain Ss046) protein is Nickel import ATP-binding protein NikE.